The sequence spans 400 residues: NADH-quinone oxidoreductase subunit D (400 aa).

The protein belongs to the complex I 49 kDa subunit family. In terms of assembly, NDH-1 is composed of 14 different subunits. Subunits NuoB, C, D, E, F, and G constitute the peripheral sector of the complex.

It is found in the cell inner membrane. It catalyses the reaction a quinone + NADH + 5 H(+)(in) = a quinol + NAD(+) + 4 H(+)(out). NDH-1 shuttles electrons from NADH, via FMN and iron-sulfur (Fe-S) centers, to quinones in the respiratory chain. The immediate electron acceptor for the enzyme in this species is believed to be a menaquinone. Couples the redox reaction to proton translocation (for every two electrons transferred, four hydrogen ions are translocated across the cytoplasmic membrane), and thus conserves the redox energy in a proton gradient. The polypeptide is NADH-quinone oxidoreductase subunit D (Chlorobaculum parvum (strain DSM 263 / NCIMB 8327) (Chlorobium vibrioforme subsp. thiosulfatophilum)).